The chain runs to 1069 residues: Regulator of nonsense transcripts 1 (1069 aa).

Positions 1-86 are disordered; sequence MDDSDDEYSR…SEKSLTEEQH (86 aa). The segment covering 28-50 has biased composition (polar residues); the sequence is IGNTQDSQFAYEQFSVPTQSSQA. The span at 51-65 shows a compositional bias: low complexity; the sequence is TDLLPGGTDGTTNDL. Basic and acidic residues predominate over residues 77-86; the sequence is SEKSLTEEQH. Residues 87–244 form the Upf1 CH-rich domain; sequence EQKLPEHACR…VRMEELWRDH (158 aa). Residues cysteine 95, cysteine 98, cysteine 109, cysteine 112, cysteine 117, histidine 127, histidine 131, histidine 137, cysteine 155, cysteine 158, cysteine 181, and cysteine 185 each coordinate Zn(2+). Residues 95–127 form a C3H region; sequence CRYCGISDPLCVAKCTVCRKWFCNSNDGTSGGH. A CC/SHH/C region spans residues 109–137; sequence CTVCRKWFCNSNDGTSGGHIVHHMVRSQH. A C4 region spans residues 155–185; the sequence is CYRCGSKNVFNLGFIPGKKDQVVVIICRTPC. ATP-binding positions include glutamine 450, 467-474, glutamine 639, tyrosine 676, and glutamate 807; that span reads GPPGTGKT. The segment at 966-1069 is disordered; it reads ARNQKDRRRG…MDDLLFSQDC (104 aa). Residues 991–1013 show a composition bias toward low complexity; that stretch reads SQGMMSQQSQQYPPQGASSQSQY.

The protein belongs to the DNA2/NAM7 helicase family. In terms of processing, phosphorylated probably by smg-1. Smg-3 and smg-4 are required for phosphorylation.

It is found in the cytoplasm. The enzyme catalyses ATP + H2O = ADP + phosphate + H(+). In terms of biological role, RNA-dependent helicase required for nonsense-mediated decay (NMD) of aberrant mRNAs containing premature stop codons and modulates the expression level of normal mRNAs. Is recruited to mRNAs upon translation termination and undergoes a cycle of phosphorylation and dephosphorylation; its phosphorylation appears to be a key step in NMD. The formation of an smg-2-3-4 surveillance complex is believed to activate NMD. This is Regulator of nonsense transcripts 1 (smg-2) from Caenorhabditis elegans.